Reading from the N-terminus, the 286-residue chain is Pantothenate synthetase (286 aa).

Position 30–37 (30–37) interacts with ATP; that stretch reads MGNLHDGH. Histidine 37 acts as the Proton donor in catalysis. Residue glutamine 61 participates in (R)-pantoate binding. Position 61 (glutamine 61) interacts with beta-alanine. 149–152 contributes to the ATP binding site; that stretch reads GEKD. Residue glutamine 155 participates in (R)-pantoate binding. ATP is bound by residues valine 178 and 186–189; that span reads LSSR.

This sequence belongs to the pantothenate synthetase family. In terms of assembly, homodimer.

It localises to the cytoplasm. The catalysed reaction is (R)-pantoate + beta-alanine + ATP = (R)-pantothenate + AMP + diphosphate + H(+). It functions in the pathway cofactor biosynthesis; (R)-pantothenate biosynthesis; (R)-pantothenate from (R)-pantoate and beta-alanine: step 1/1. Functionally, catalyzes the condensation of pantoate with beta-alanine in an ATP-dependent reaction via a pantoyl-adenylate intermediate. This is Pantothenate synthetase from Edwardsiella ictaluri (strain 93-146).